The following is a 456-amino-acid chain: Signal transduction histidine-protein kinase ArlS (456 aa).

The next 2 helical transmembrane spans lie at 13–33 (LITTLITFTTILLFCLIIIFF) and 157–177 (IVALAFGLIATIITAGVSYIF). Positions 179–232 (SQITKPIVTMSNKMNQIRRDGFQNKLELTTNYEETDNLIDTFNEMMYQIEESFN) constitute an HAMP domain. Residues 240 to 456 (DASHELRTPL…TFKISFPVLN (217 aa)) enclose the Histidine kinase domain. Histidine 243 carries the post-translational modification Phosphohistidine; by autocatalysis.

In terms of processing, autophosphorylated.

It localises to the cell membrane. It catalyses the reaction ATP + protein L-histidine = ADP + protein N-phospho-L-histidine.. Functionally, member of the two-component regulatory system ArlS/ArlR. ArlS probably functions as a sensor protein kinase which is autophosphorylated at a histidine residue and transfers its phosphate group to ArlR. This Staphylococcus epidermidis (strain ATCC 12228 / FDA PCI 1200) protein is Signal transduction histidine-protein kinase ArlS (arlS).